Consider the following 362-residue polypeptide: Endopolygalacturonase II (362 aa).

The N-terminal stretch at 1–20 (MHSFASLLRYGLAAGATLAS) is a signal peptide. The propeptide occupies 21 to 27 (ASPIEAR). A disulfide bridge connects residues Cys30 and Cys45. Residues 156 to 186 (SDDITLTDITINNADGDSLGGHNTDAFDVGN) form a PbH1 1 repeat. Asp201 (proton donor) is an active-site residue. Cys203 and Cys219 are oxidised to a cystine. PbH1 repeat units lie at residues 209 to 229 (GENIWFTGGTCIGGHGLSIGS), 238 to 259 (VKNVTIEHSTVSNSENAVRIKT), 267 to 289 (VSEITYSNIVMSGISDYGVVIQQ), and 301 to 322 (TNGVTITDVKLESVTGTVDSKA). His223 is a catalytic residue. The N-linked (GlcNAc...) asparagine glycan is linked to Asn240. Disulfide bonds link Cys329–Cys334 and Cys353–Cys362.

This sequence belongs to the glycosyl hydrolase 28 family.

It is found in the secreted. The catalysed reaction is (1,4-alpha-D-galacturonosyl)n+m + H2O = (1,4-alpha-D-galacturonosyl)n + (1,4-alpha-D-galacturonosyl)m.. Involved in maceration and soft-rotting of plant tissue. Hydrolyzes the 1,4-alpha glycosidic bonds of de-esterified pectate in the smooth region of the plant cell wall. This is Endopolygalacturonase II (pgaII) from Aspergillus awamori (Black koji mold).